The chain runs to 580 residues: Laccase-6 (580 aa).

The first 22 residues, 1–22, serve as a signal peptide directing secretion; it reads MSCSWMIPVFAILAFVASAAQA. Plastocyanin-like domains lie at 30-148 and 158-317; these read NVAT…PRRA and EEKT…YVDA. Asn44 and Asn78 each carry an N-linked (GlcNAc...) asparagine glycan. Cu cation contacts are provided by His82, His84, His127, and His129. N-linked (GlcNAc...) asparagine glycans are attached at residues Asn306, Asn335, Asn385, Asn397, and Asn462. One can recognise a Plastocyanin-like 3 domain in the interval 424–564; it reads DFPDQPPVAF…AMVFEVESGP (141 aa). Cu cation-binding residues include His480, His483, His485, His543, Cys544, His545, and His549.

Belongs to the multicopper oxidase family. Cu cation serves as cofactor.

The protein localises to the secreted. It localises to the extracellular space. The protein resides in the apoplast. The catalysed reaction is 4 hydroquinone + O2 = 4 benzosemiquinone + 2 H2O. In terms of biological role, lignin degradation and detoxification of lignin-derived products. This is Laccase-6 (LAC6) from Oryza sativa subsp. japonica (Rice).